The chain runs to 819 residues: Pentatricopeptide repeat-containing protein At1g52620 (819 aa).

18 PPR repeats span residues 98 to 132 (NGFACSSFLKLLARYRIFNEIEDVLGNLRNENVKL), 133 to 163 (THEALSHVLHAYAESGSLSKAVEIYDYVVEL), 169 to 203 (DVIACNSLLSLLVKSRRLGDARKVYDEMCDRGDSV), 204 to 238 (DNYSTCILVKGMCNEGKVEVGRKLIEGRWGKGCIP), 239 to 273 (NIVFYNTIIGGYCKLGDIENAYLVFKELKLKGFMP), 274 to 308 (TLETFGTMINGFCKEGDFVASDRLLSEVKERGLRV), 309 to 343 (SVWFLNNIIDAKYRHGYKVDPAESIGWIIANDCKP), 344 to 378 (DVATYNILINRLCKEGKKEVAVGFLDEASKKGLIP), 379 to 413 (NNLSYAPLIQAYCKSKEYDIASKLLLQMAERGCKP), 414 to 448 (DIVTYGILIHGLVVSGHMDDAVNMKVKLIDRGVSP), 449 to 483 (DAAIYNMLMSGLCKTGRFLPAKLLFSEMLDRNILP), 484 to 518 (DAYVYATLIDGFIRSGDFDEARKVFSLSVEKGVKV), 519 to 553 (DVVHHNAMIKGFCRSGMLDEALACMNRMNEEHLVP), 554 to 588 (DKFTYSTIIDGYVKQQDMATAIKIFRYMEKNKCKP), 589 to 623 (NVVTYTSLINGFCCQGDFKMAEETFKEMQLRDLVP), 624 to 659 (NVVTYTTLIRSLAKESSTLEKAVYYWELMMTNKCVP), 709 to 743 (HAAAYNSALVCLCVHGMVKTACMFQDKMVKKGFSP), and 744 to 779 (DPVSFAAILHGFCVVGNSKQWRNMDFCNLGEKGLEV).

It belongs to the PPR family. P subfamily.

This chain is Pentatricopeptide repeat-containing protein At1g52620, found in Arabidopsis thaliana (Mouse-ear cress).